We begin with the raw amino-acid sequence, 22 residues long: Cysteine-rich venom protein collettin-a (22 aa).

The segment covering 1–15 (SNKKNYQKEIVDKHN) has biased composition (basic and acidic residues). A disordered region spans residues 1-22 (SNKKNYQKEIVDKHNALRRSVK).

It belongs to the CRISP family. In terms of processing, contains 8 disulfide bonds. In terms of tissue distribution, expressed by the venom gland.

The protein resides in the secreted. The protein is Cysteine-rich venom protein collettin-a of Pseudechis colletti (Collett's snake).